The primary structure comprises 634 residues: Knob-associated histidine-rich protein (634 aa).

A signal peptide spans 1-34; sequence MKSFKNKNTLRRKKAFPVFTKILLVSFLVWVLKC. An N-linked (GlcNAc...) asparagine glycan is attached at N42. Residues 57–87 are compositionally biased toward basic residues; it reads AQKQHEHHHHHHHQHQHQHQAPHQAHHHHHH. Disordered regions lie at residues 57-143 and 347-634; these read AQKQ…QVFR and SSVN…GCCG. Positions 95–104 are enriched in low complexity; sequence PQVHQQVHGQ. Positions 108–117 are enriched in basic residues; sequence HHHHHHHHHQ. Basic and acidic residues-rich tracts occupy residues 354-375 and 396-405; these read KHGDEKHHSSKKHEGNDGEGEK and KDNEDAESVK. The segment covering 406–422 has biased composition (basic residues); the sequence is SKKHKSHDCEKKKSKKH. Basic and acidic residues-rich tracts occupy residues 423–444 and 453–493; these read KDNEDAESVKSKKSVKEKGEKH and KTNE…KKVD. Residues 494–505 show a composition bias toward polar residues; the sequence is STSADNKSTNAA. A compositionally biased stretch (basic and acidic residues) spans 509-520; the sequence is AKDKTQGGKTDK. 4 repeat units span residues 540 to 549, 550 to 559, 560 to 569, and 570 to 579. Positions 540–580 are 4 X 10 AA tandem repeats of [TS]-[KE]-[GE]-A-T-K-[EG]-A-S-T; the sequence is TKGATKEASTSKEATKEASTSKGATKEASTTEGATKGASTT. Residues 567–591 are compositionally biased toward low complexity; the sequence is ASTTEGATKGASTTAGSTTGATTGA. Positions 605–620 are enriched in polar residues; it reads AANNGEQVMSRGQAQL. Positions 625 to 634 are enriched in basic residues; sequence KKKKKRGCCG.

It is found in the secreted. Its function is as follows. KAHRP might mimick human histidine-rich glycoproteins to anchor host thrombospondin or a parasite analog in a binding complex with the endothelial cell receptor. This is Knob-associated histidine-rich protein from Plasmodium falciparum (isolate FCR-3 / Gambia).